The sequence spans 442 residues: GTPase Der (442 aa).

EngA-type G domains follow at residues Ala-2–Gly-168 and Leu-182–Asp-356. GTP contacts are provided by residues Gly-8–Ser-15, Asp-55–Leu-59, Asn-118–Glu-121, Gly-188–Ser-195, Asp-235–Met-239, and Asn-301–Asp-304. The KH-like domain maps to Leu-357–Lys-442.

This sequence belongs to the TRAFAC class TrmE-Era-EngA-EngB-Septin-like GTPase superfamily. EngA (Der) GTPase family. Associates with the 50S ribosomal subunit.

In terms of biological role, GTPase that plays an essential role in the late steps of ribosome biogenesis. This Kosmotoga olearia (strain ATCC BAA-1733 / DSM 21960 / TBF 19.5.1) protein is GTPase Der.